The following is a 434-amino-acid chain: Trigger factor (434 aa).

The 86-residue stretch at 161-246 (EDRVTVDFNG…LKKVEERELP (86 aa)) folds into the PPIase FKBP-type domain.

Belongs to the FKBP-type PPIase family. Tig subfamily.

It localises to the cytoplasm. The enzyme catalyses [protein]-peptidylproline (omega=180) = [protein]-peptidylproline (omega=0). In terms of biological role, involved in protein export. Acts as a chaperone by maintaining the newly synthesized protein in an open conformation. Functions as a peptidyl-prolyl cis-trans isomerase. The polypeptide is Trigger factor (Proteus mirabilis (strain HI4320)).